The following is a 361-amino-acid chain: RNA 3'-terminal phosphate cyclase (361 aa).

Residues Gln105, Pro132, Tyr295, Asp298, Gln299, and His321 each contribute to the ATP site. His321 functions as the Tele-AMP-histidine intermediate in the catalytic mechanism.

It belongs to the RNA 3'-terminal cyclase family. Type 1 subfamily.

The protein localises to the nucleus. Its subcellular location is the nucleoplasm. The enzyme catalyses a 3'-end 3'-phospho-ribonucleotide-RNA + ATP = a 3'-end 2',3'-cyclophospho-ribonucleotide-RNA + AMP + diphosphate. Functionally, catalyzes the conversion of 3'-phosphate to a 2',3'-cyclic phosphodiester at the end of RNA. The mechanism of action of the enzyme occurs in 3 steps: (A) adenylation of the enzyme by ATP; (B) transfer of adenylate to an RNA-N3'P to produce RNA-N3'PP5'A; (C) and attack of the adjacent 2'-hydroxyl on the 3'-phosphorus in the diester linkage to produce the cyclic end product. Likely functions in some aspects of cellular RNA processing. Function plays an important role in a RNA repair and splicing pathway which controls axon regeneration in response to peripheral (PNS) and central nervous system (CNS) injury. In response to axotomy, negatively regulates splicing of Xbp1 which in turn activates downstream effectors which inhibit axon regeneration, including down-regulating the microtubule regulators ringer and futsch. The polypeptide is RNA 3'-terminal phosphate cyclase (Drosophila melanogaster (Fruit fly)).